The primary structure comprises 419 residues: Protein FAM217A (419 aa).

Disordered stretches follow at residues 1–23 (MGRK…QENL), 100–119 (DKRN…LSES), 234–298 (PSSS…SRSL), and 362–388 (PIPL…HRKS). Residues 7-23 (ESCSANPHSSSISQENL) are compositionally biased toward polar residues. Over residues 284–298 (SLSTAGKSKSNSRSL) the composition is skewed to polar residues. Residues 378–388 (PRTKKKCHRKS) show a composition bias toward basic residues.

Belongs to the FAM217 family.

This is Protein FAM217A (Fam217a) from Rattus norvegicus (Rat).